The sequence spans 381 residues: Estradiol 17-beta-dehydrogenase 2 (381 aa).

A helical; Signal-anchor for type II membrane protein membrane pass occupies residues 4–24 (FSSESAWLCLTATAVLGGMLL). Residue 83-112 (QKAVLVTGADSGFGHALAKHLDKLGFTVFA) coordinates NAD(+). Serine 220 provides a ligand contact to substrate. Residue tyrosine 233 is the Proton acceptor of the active site.

It belongs to the short-chain dehydrogenases/reductases (SDR) family. As to quaternary structure, homodimer. In terms of tissue distribution, highly expressed in the placenta, and in the small intestine, and liver.

The protein resides in the endoplasmic reticulum membrane. The enzyme catalyses 17beta-estradiol + NAD(+) = estrone + NADH + H(+). It catalyses the reaction testosterone + NAD(+) = androst-4-ene-3,17-dione + NADH + H(+). It carries out the reaction 17beta-hydroxy-5alpha-androstan-3-one + NAD(+) = 5alpha-androstan-3,17-dione + NADH + H(+). The catalysed reaction is (20S)-hydroxypregn-4-en-3-one + NAD(+) = progesterone + NADH + H(+). Its function is as follows. Catalyzes the NAD-dependent oxidation of highly active 17beta-hydroxysteroids, such as estradiol (E2), testosterone (T), and dihydrotestosterone (DHT), to their less active forms and thus regulates the biological potency of these steroids. Oxidizes estradiol to estrone, testosterone to androstenedione, and dihydrotestosterone to 5alpha-androstan-3,17-dione. Also has 20-alpha-HSD activity. The protein is Estradiol 17-beta-dehydrogenase 2 (Hsd17b2) of Rattus norvegicus (Rat).